The following is a 267-amino-acid chain: Phosphonates import ATP-binding protein PhnC 2 (267 aa).

Residues L3–Q247 enclose the ABC transporter domain. G36–T43 is a binding site for ATP.

The protein belongs to the ABC transporter superfamily. Phosphonates importer (TC 3.A.1.9.1) family. The complex is composed of two ATP-binding proteins (PhnC), two transmembrane proteins (PhnE) and a solute-binding protein (PhnD).

It localises to the cell inner membrane. The enzyme catalyses phosphonate(out) + ATP + H2O = phosphonate(in) + ADP + phosphate + H(+). Functionally, part of the ABC transporter complex PhnCDE involved in phosphonates import. Responsible for energy coupling to the transport system. The sequence is that of Phosphonates import ATP-binding protein PhnC 2 from Pseudomonas aeruginosa (strain UCBPP-PA14).